Here is a 70-residue protein sequence, read N- to C-terminus: ATP synthase subunit c (70 aa).

The next 2 membrane-spanning stretches (helical) occupy residues 4 to 24 and 47 to 67; these read IAAG…NGLV and FIGV…ALMV.

This sequence belongs to the ATPase C chain family. As to quaternary structure, F-type ATPases have 2 components, F(1) - the catalytic core - and F(0) - the membrane proton channel. F(1) has five subunits: alpha(3), beta(3), gamma(1), delta(1), epsilon(1). F(0) has three main subunits: a(1), b(2) and c(10-14). The alpha and beta chains form an alternating ring which encloses part of the gamma chain. F(1) is attached to F(0) by a central stalk formed by the gamma and epsilon chains, while a peripheral stalk is formed by the delta and b chains.

The protein resides in the cell membrane. In terms of biological role, f(1)F(0) ATP synthase produces ATP from ADP in the presence of a proton or sodium gradient. F-type ATPases consist of two structural domains, F(1) containing the extramembraneous catalytic core and F(0) containing the membrane proton channel, linked together by a central stalk and a peripheral stalk. During catalysis, ATP synthesis in the catalytic domain of F(1) is coupled via a rotary mechanism of the central stalk subunits to proton translocation. Functionally, key component of the F(0) channel; it plays a direct role in translocation across the membrane. A homomeric c-ring of between 10-14 subunits forms the central stalk rotor element with the F(1) delta and epsilon subunits. In Lactiplantibacillus plantarum (strain ATCC BAA-793 / NCIMB 8826 / WCFS1) (Lactobacillus plantarum), this protein is ATP synthase subunit c.